Here is a 264-residue protein sequence, read N- to C-terminus: Proteasome subunit beta type-4 (264 aa).

Methionine 1 bears the N-acetylmethionine mark. Positions 1 to 45 are excised as a propeptide; the sequence is MEAFLGSRSGLWAGGPAPGQFYRIPSTPDSFMDPASALYRGPITR. A Phosphoserine modification is found at serine 26. Tyrosine 102 carries the post-translational modification Phosphotyrosine.

It belongs to the peptidase T1B family. In terms of assembly, the 26S proteasome consists of a 20S proteasome core and two 19S regulatory subunits. The 20S proteasome core is a barrel-shaped complex made of 28 subunits that are arranged in four stacked rings. The two outer rings are each formed by seven alpha subunits, and the two inner rings are formed by seven beta subunits. The proteolytic activity is exerted by three beta-subunits PSMB5, PSMB6 and PSMB7. Forms a ternary complex with SMAD1 and OAZ1 before PSMB4 is incorporated into the 20S proteasome. Interacts with PRPF19. As to quaternary structure, (Microbial infection) Interacts with HTLV-1 Tax protein. (Microbial infection) Interacts with HIV-1 Nef and Tat proteins.

It is found in the cytoplasm. The protein resides in the nucleus. Functionally, non-catalytic component of the 20S core proteasome complex involved in the proteolytic degradation of most intracellular proteins. This complex plays numerous essential roles within the cell by associating with different regulatory particles. Associated with two 19S regulatory particles, forms the 26S proteasome and thus participates in the ATP-dependent degradation of ubiquitinated proteins. The 26S proteasome plays a key role in the maintenance of protein homeostasis by removing misfolded or damaged proteins that could impair cellular functions, and by removing proteins whose functions are no longer required. Associated with the PA200 or PA28, the 20S proteasome mediates ubiquitin-independent protein degradation. This type of proteolysis is required in several pathways including spermatogenesis (20S-PA200 complex) or generation of a subset of MHC class I-presented antigenic peptides (20S-PA28 complex). SMAD1/OAZ1/PSMB4 complex mediates the degradation of the CREBBP/EP300 repressor SNIP1. This chain is Proteasome subunit beta type-4, found in Homo sapiens (Human).